A 387-amino-acid chain; its full sequence is Phosphoglycerate kinase (387 aa).

Substrate is bound by residues 21–23 (DLN), arginine 36, 59–62 (HLGR), arginine 113, and arginine 146. Residues lysine 197, glutamate 314, and 340-343 (GGDT) contribute to the ATP site.

It belongs to the phosphoglycerate kinase family. Monomer.

The protein resides in the cytoplasm. It carries out the reaction (2R)-3-phosphoglycerate + ATP = (2R)-3-phospho-glyceroyl phosphate + ADP. It participates in carbohydrate degradation; glycolysis; pyruvate from D-glyceraldehyde 3-phosphate: step 2/5. In Pseudomonas entomophila (strain L48), this protein is Phosphoglycerate kinase.